We begin with the raw amino-acid sequence, 690 residues long: Glutaminase A (690 aa).

The first 20 residues, 1–20 (MMHFLSFCLSVASLVSYAGA), serve as a signal peptide directing secretion. N-linked (GlcNAc...) asparagine glycosylation is found at Asn-80, Asn-96, Asn-435, Asn-508, Asn-528, Asn-538, and Asn-571.

Belongs to the fungal glutaminase gtaA family.

The protein resides in the secreted. It catalyses the reaction L-glutamine + H2O = L-glutamate + NH4(+). Activity is inhibited by about 80% in the presence of 18% sodium chloride. In terms of biological role, glutaminase catalyzes the hydrolysis of glutamine to glutamic acid and plays a key role in nitrogen metabolism. Catalyzes the hydrolysis not only of L-glutamine but also of D-glutamine. The polypeptide is Glutaminase A (Aspergillus oryzae (strain ATCC 42149 / RIB 40) (Yellow koji mold)).